The chain runs to 114 residues: Large ribosomal subunit protein uL18 (114 aa).

Belongs to the universal ribosomal protein uL18 family. Part of the 50S ribosomal subunit; part of the 5S rRNA/L5/L18/L25 subcomplex. Contacts the 5S and 23S rRNAs.

Its function is as follows. This is one of the proteins that bind and probably mediate the attachment of the 5S RNA into the large ribosomal subunit, where it forms part of the central protuberance. This is Large ribosomal subunit protein uL18 from Aster yellows phytoplasma.